A 147-amino-acid polypeptide reads, in one-letter code: Protein phosphatase 1 regulatory subunit 14B (147 aa).

Residues 1–15 (MADSGPAGGAALAAP) are compositionally biased toward low complexity. A disordered region spans residues 1 to 55 (MADSGPAGGAALAAPAPGPGSGSTGPRVYFQSPPGAAGEGPGGADDDGPVRRQGK). Ala-2 is subject to N-acetylalanine. Position 21 is a phosphoserine (Ser-21). At Tyr-29 the chain carries Phosphotyrosine. At Ser-32 the chain carries Phosphoserine. Thr-57 carries the post-translational modification Phosphothreonine. The stretch at 61 to 103 (DRKELRKRLNLEEWILEQLTRLYDCQEEEIPELEIDVDELLDM) forms a coiled coil.

This sequence belongs to the PP1 inhibitor family. In terms of processing, phosphorylated primarily on Thr-57 by PKC (in vitro). An unknown Ser is also phosphorylated by PKC (in vitro). In terms of tissue distribution, ubiquitous. Highly expressed in testis. Detected at low levels in the other tissues tested. Highly expressed in cardiac muscle, bladder and aorta (at protein level).

The protein localises to the cytoplasm. In terms of biological role, inhibitor of PPP1CA. Has over 50-fold higher inhibitory activity when phosphorylated. The chain is Protein phosphatase 1 regulatory subunit 14B (Ppp1r14b) from Mus musculus (Mouse).